The sequence spans 436 residues: GTPase Der (436 aa).

EngA-type G domains follow at residues Pro-4–Glu-167 and Ile-176–Ser-351. Residues Gly-10–Ser-17, Asp-57–Ile-61, Asn-119–Asp-122, Gly-182–Ser-189, Asp-229–Met-233, and Asn-294–Asp-297 contribute to the GTP site. Residues Ile-352–Asp-436 form the KH-like domain.

This sequence belongs to the TRAFAC class TrmE-Era-EngA-EngB-Septin-like GTPase superfamily. EngA (Der) GTPase family. As to quaternary structure, associates with the 50S ribosomal subunit.

GTPase that plays an essential role in the late steps of ribosome biogenesis. In Bacillus cereus (strain G9842), this protein is GTPase Der.